The primary structure comprises 588 residues: Phenol 2-monooxygenase fsqG (588 aa).

Residues 9-38, 17-18, 37-39, 45-50, Tyr-232, 289-299, Asp-299, and 309-313 contribute to the FAD site; these read DVLIIGAGPAGLTTANSFNGSNCRVRLIDW, PA, DWK, TGRADG, ARHNRIFLAGD, and GQGMN. Residues Asp-49 and Tyr-232 each contribute to the substrate site.

It belongs to the PheA/TfdB FAD monooxygenase family. Homodimer. Requires FAD as cofactor.

Its pathway is secondary metabolite biosynthesis. In terms of biological role, phenol 2-monooxygenase; part of the gene cluster that mediates the biosynthesis of the isoquinoline alkaloids fumisoquin A, fumisoquin B and fumisoquin C; as well as small amounts of fumipyrrole as a shunt metabolite. The products of the cluster lead to a brown coloration and are important for growth and conidiation. The nonribosomal peptide synthetase-like protein fsqF, which lacks a canonical condensation domain, is required for addition of a serine-derived dehydroalanine moiety to activated tyrosine but is not essential for the subsequent steps leading to isoquinoline formation. A different enzyme, most likely the ATP-grasp enzyme fsqD, is responsible for activation of tyrosine. Three additional enzymes encoded by the fsq cluster, the N-methyltransferase fsqC, the phenol 2-monooxygenase fsqG and the FAD-dependent oxidase fsqB, catalyze the formation of the isoquinoline ring system in the fumisoquins. FsqB converts the fspF thiolation domain-bound (2S,4S,5S)-2-amino-6-(3,4-dihydroxyphenyl)-4-hydroxy-5-(methylamino)hexanoyl into isoquinoline. The cyclization most likely proceeds via a two-step mechanism, beginning with FAD-dependent oxidation of the methyl group to an iminium species followed by electrophilic attack on the deprotonated phenol. The polypeptide is Phenol 2-monooxygenase fsqG (Aspergillus fumigatus (strain ATCC MYA-4609 / CBS 101355 / FGSC A1100 / Af293) (Neosartorya fumigata)).